A 366-amino-acid chain; its full sequence is Flagellar P-ring protein (366 aa).

The first 27 residues, 1-27 (MKSKYSIFCMFLLRGFIFLGTVFSLNS), serve as a signal peptide directing secretion.

This sequence belongs to the FlgI family. As to quaternary structure, the basal body constitutes a major portion of the flagellar organelle and consists of four rings (L,P,S, and M) mounted on a central rod.

Its subcellular location is the periplasm. The protein localises to the bacterial flagellum basal body. Functionally, assembles around the rod to form the L-ring and probably protects the motor/basal body from shearing forces during rotation. The sequence is that of Flagellar P-ring protein from Leptospira interrogans serogroup Icterohaemorrhagiae serovar copenhageni (strain Fiocruz L1-130).